The chain runs to 201 residues: 3-isopropylmalate dehydratase small subunit (201 aa).

The protein belongs to the LeuD family. LeuD type 1 subfamily. Heterodimer of LeuC and LeuD.

It catalyses the reaction (2R,3S)-3-isopropylmalate = (2S)-2-isopropylmalate. Its pathway is amino-acid biosynthesis; L-leucine biosynthesis; L-leucine from 3-methyl-2-oxobutanoate: step 2/4. Its function is as follows. Catalyzes the isomerization between 2-isopropylmalate and 3-isopropylmalate, via the formation of 2-isopropylmaleate. The polypeptide is 3-isopropylmalate dehydratase small subunit (Escherichia coli O45:K1 (strain S88 / ExPEC)).